The chain runs to 1324 residues: DNA-directed RNA polymerase subunit beta' (1324 aa).

Zn(2+) is bound by residues cysteine 219, cysteine 292, cysteine 299, and cysteine 302. The disordered stretch occupies residues 1293–1324 (ARDFEFASSDVEEDELTEEDDDYGDEEEEDAF). Acidic residues predominate over residues 1302–1324 (DVEEDELTEEDDDYGDEEEEDAF).

The protein belongs to the RNA polymerase beta' chain family. RpoC2 subfamily. In cyanobacteria the RNAP catalytic core is composed of 2 alpha, 1 beta, 1 beta', 1 gamma and 1 omega subunit. When a sigma factor is associated with the core the holoenzyme is formed, which can initiate transcription. Zn(2+) serves as cofactor.

It carries out the reaction RNA(n) + a ribonucleoside 5'-triphosphate = RNA(n+1) + diphosphate. DNA-dependent RNA polymerase catalyzes the transcription of DNA into RNA using the four ribonucleoside triphosphates as substrates. The sequence is that of DNA-directed RNA polymerase subunit beta' from Thermosynechococcus vestitus (strain NIES-2133 / IAM M-273 / BP-1).